A 189-amino-acid polypeptide reads, in one-letter code: uncharacterized protein (189 aa).

Belongs to the OsmC/Ohr family.

This is an uncharacterized protein from Methanocaldococcus jannaschii (strain ATCC 43067 / DSM 2661 / JAL-1 / JCM 10045 / NBRC 100440) (Methanococcus jannaschii).